The primary structure comprises 288 residues: Peroxisomal protein PEX21 (288 aa).

A Glycyl cysteine thioester (Cys-Gly) (interchain with G-Cter in ubiquitin) cross-link involves residue Cys-5.

This sequence belongs to the peroxin-21 family. As to quaternary structure, interacts with PEX7. Interacts with PEX13. Interacts with SES1. Monoubiquitinated at Cys-5; acts as a signal for PEX21 extraction and is required for proper export from peroxisomes and recycling.

It localises to the cytoplasm. It is found in the cytosol. The protein localises to the peroxisome. Its function is as follows. Receptor that mediates peroxisomal import of proteins containing a C-terminal PTS2-type peroxisomal targeting signal via its interaction with PEX7. Interaction with PEX7 only takes place when PEX7 is associated with cargo proteins containing a PTS2 peroxisomal targeting signal. PEX7 along with PTS2-containing cargo proteins are then translocated through the PEX13-PEX14 docking complex together with PEX21. Acts as an activator of the seryl-tRNA synthetase SES1 by increasing its binding to tRNA. This Saccharomyces cerevisiae (strain ATCC 204508 / S288c) (Baker's yeast) protein is Peroxisomal protein PEX21 (PEX21).